The following is a 366-amino-acid chain: Holliday junction branch migration complex subunit RuvB (366 aa).

Positions 1–49 (MAIISSKKQPPEPNGQPNKRPESAPSVPKEKVLQPEAAIDEQGKQEESI) are disordered. Residues 13–210 (PNGQPNKRPE…FGLIQKLRFY (198 aa)) are large ATPase domain (RuvB-L). Residues Ile-49, Arg-50, Gly-91, Lys-94, Thr-95, Thr-96, 157–159 (EDY), Arg-200, Tyr-210, and Arg-247 each bind ATP. Residue Thr-95 participates in Mg(2+) binding. Positions 211–281 (EVDELSQIVL…IAAEALQLFQ (71 aa)) are small ATPAse domain (RuvB-S). Residues 284–366 (PCGLDWTDRR…TPPNEQLSLL (83 aa)) form a head domain (RuvB-H) region. Residues Arg-339 and Arg-344 each coordinate DNA.

The protein belongs to the RuvB family. In terms of assembly, homohexamer. Forms an RuvA(8)-RuvB(12)-Holliday junction (HJ) complex. HJ DNA is sandwiched between 2 RuvA tetramers; dsDNA enters through RuvA and exits via RuvB. An RuvB hexamer assembles on each DNA strand where it exits the tetramer. Each RuvB hexamer is contacted by two RuvA subunits (via domain III) on 2 adjacent RuvB subunits; this complex drives branch migration. In the full resolvosome a probable DNA-RuvA(4)-RuvB(12)-RuvC(2) complex forms which resolves the HJ.

The protein resides in the cytoplasm. The enzyme catalyses ATP + H2O = ADP + phosphate + H(+). Its function is as follows. The RuvA-RuvB-RuvC complex processes Holliday junction (HJ) DNA during genetic recombination and DNA repair, while the RuvA-RuvB complex plays an important role in the rescue of blocked DNA replication forks via replication fork reversal (RFR). RuvA specifically binds to HJ cruciform DNA, conferring on it an open structure. The RuvB hexamer acts as an ATP-dependent pump, pulling dsDNA into and through the RuvAB complex. RuvB forms 2 homohexamers on either side of HJ DNA bound by 1 or 2 RuvA tetramers; 4 subunits per hexamer contact DNA at a time. Coordinated motions by a converter formed by DNA-disengaged RuvB subunits stimulates ATP hydrolysis and nucleotide exchange. Immobilization of the converter enables RuvB to convert the ATP-contained energy into a lever motion, pulling 2 nucleotides of DNA out of the RuvA tetramer per ATP hydrolyzed, thus driving DNA branch migration. The RuvB motors rotate together with the DNA substrate, which together with the progressing nucleotide cycle form the mechanistic basis for DNA recombination by continuous HJ branch migration. Branch migration allows RuvC to scan DNA until it finds its consensus sequence, where it cleaves and resolves cruciform DNA. The protein is Holliday junction branch migration complex subunit RuvB of Nostoc sp. (strain PCC 7120 / SAG 25.82 / UTEX 2576).